A 355-amino-acid chain; its full sequence is 3-isopropylmalate dehydrogenase (355 aa).

Substrate contacts are provided by R90, R100, R128, and D222. Residues D222, D246, and D250 each contribute to the Mg(2+) site. 280–292 (GSAPDIAGKGIAN) contributes to the NAD(+) binding site.

Belongs to the isocitrate and isopropylmalate dehydrogenases family. LeuB type 1 subfamily. In terms of assembly, homodimer. Mg(2+) serves as cofactor. It depends on Mn(2+) as a cofactor.

It localises to the cytoplasm. It carries out the reaction (2R,3S)-3-isopropylmalate + NAD(+) = 4-methyl-2-oxopentanoate + CO2 + NADH. It participates in amino-acid biosynthesis; L-leucine biosynthesis; L-leucine from 3-methyl-2-oxobutanoate: step 3/4. Catalyzes the oxidation of 3-carboxy-2-hydroxy-4-methylpentanoate (3-isopropylmalate) to 3-carboxy-4-methyl-2-oxopentanoate. The product decarboxylates to 4-methyl-2 oxopentanoate. This chain is 3-isopropylmalate dehydrogenase, found in Burkholderia thailandensis (strain ATCC 700388 / DSM 13276 / CCUG 48851 / CIP 106301 / E264).